Here is a 174-residue protein sequence, read N- to C-terminus: CEN-like protein 1 (174 aa).

It belongs to the phosphatidylethanolamine-binding protein family. Expressed in vegetative axillary meristems but not in the main shoot meristem.

The protein localises to the cytoplasm. Its function is as follows. May form complexes with phosphorylated ligands by interfering with kinases and their effectors. The sequence is that of CEN-like protein 1 (CET1) from Nicotiana tabacum (Common tobacco).